A 389-amino-acid chain; its full sequence is Putative RNA methyltransferase R405 (389 aa).

The S-adenosyl-L-methionine site is built by Q207, D261, and D314. The active-site Nucleophile is the C342.

This sequence belongs to the class I-like SAM-binding methyltransferase superfamily. RNA M5U methyltransferase family.

This is Putative RNA methyltransferase R405 from Acanthamoeba polyphaga (Amoeba).